The primary structure comprises 588 residues: Adenine deaminase (588 aa).

Belongs to the metallo-dependent hydrolases superfamily. Adenine deaminase family. Homodimer. Requires Mn(2+) as cofactor.

It carries out the reaction adenine + H2O + H(+) = hypoxanthine + NH4(+). The protein is Adenine deaminase of Escherichia coli (strain SMS-3-5 / SECEC).